The following is a 900-amino-acid chain: Protein translocase subunit SecA (900 aa).

ATP is bound by residues Q87, 105 to 109 (GEGKT), and D512. A disordered region spans residues 849-900 (ERLAQQQQFSHQEEDSLNTGSPAQADRKIGRNDPCPCGSGKKYKQCHGRLQK). Positions 883, 885, 894, and 895 each coordinate Zn(2+). Positions 889-900 (KKYKQCHGRLQK) are enriched in basic residues.

Belongs to the SecA family. In terms of assembly, monomer and homodimer. Part of the essential Sec protein translocation apparatus which comprises SecA, SecYEG and auxiliary proteins SecDF-YajC and YidC. The cofactor is Zn(2+).

The protein localises to the cell inner membrane. It is found in the cytoplasm. The catalysed reaction is ATP + H2O + cellular proteinSide 1 = ADP + phosphate + cellular proteinSide 2.. Part of the Sec protein translocase complex. Interacts with the SecYEG preprotein conducting channel. Has a central role in coupling the hydrolysis of ATP to the transfer of proteins into and across the cell membrane, serving both as a receptor for the preprotein-SecB complex and as an ATP-driven molecular motor driving the stepwise translocation of polypeptide chains across the membrane. The chain is Protein translocase subunit SecA from Pectobacterium atrosepticum (strain SCRI 1043 / ATCC BAA-672) (Erwinia carotovora subsp. atroseptica).